Here is a 114-residue protein sequence, read N- to C-terminus: Lectin MVL (114 aa).

Repeat 1 spans residues 2–55 (ASYKVNIPAGPLWSNAEAQQVGPKIAAAHQGNFTGQWTTVVESAMSVVEVELQV). Residues 12–16 (PLWSN), glutamine 20, and 36–44 (GQWTTVVES) contribute to the a carbohydrate site. The linker stretch occupies residues 56–60 (ENTGI). Repeat unit 2 spans residues 61-114 (HEFKTDVLAGPLWSNDEAQKLGPQIAASYGAEFTGQWRTIVEGVMSVIQIKYTF). Residues 71 to 75 (PLWSN), glutamine 79, and 95 to 103 (GQWRTIVEG) each bind a carbohydrate.

Homodimer.

It localises to the cytoplasm. Functionally, carbohydrate-binding protein that binds oligomannosides such as Man(6)GlcNAc(2) with sub-micromolar affinities. The specificity of MVL is unique in that its minimal target comprises the Man-alpha-(1-&gt;6)-Man-beta-(1-&gt;4)-GlcNAc-beta-(1-&gt;4)-GlcNAc tetrasaccharide core (Man(2)A) found in N-linked oligomannosides. Displays hemagglutininating activity on rabbit, horse and hen erythrocytes. This activity is inhibited by yeast mannan. Does not bind mono- and disaccharides. Inhibits HIV-1 envelope-mediated cell fusion at nanomolar concentrations through carbohydrate-mediated interactions with high-mannose residues on the surface of the HIV envelope glycoprotein gp120. Unexpectedly for a lectin, one of the 2 oligomannose binding sites of MVL can catalyze the cleavage of chitin fragments (such as chitotriose, i.e. GlcNAc(3) or GlcNAc-beta-(1-&gt;4)-GlcNAcbeta-(1-&gt;4)-GlcNAc, and chitotetraose, i.e. GlcNAc(4)) to GlcNAc. This weak beta-1,4-glycosidase activity is restricted to the C-terminal carbohydrate-binding site. Does not cleave Man(3)GlcNAc(2) or the tetrasaccharide Man(2)A. This Microcystis viridis (Polycystis viridis) protein is Lectin MVL (mvl).